We begin with the raw amino-acid sequence, 316 residues long: Methionyl-tRNA formyltransferase (316 aa).

Position 111–114 (Ser111–Pro114) interacts with (6S)-5,6,7,8-tetrahydrofolate.

The protein belongs to the Fmt family.

The catalysed reaction is L-methionyl-tRNA(fMet) + (6R)-10-formyltetrahydrofolate = N-formyl-L-methionyl-tRNA(fMet) + (6S)-5,6,7,8-tetrahydrofolate + H(+). Attaches a formyl group to the free amino group of methionyl-tRNA(fMet). The formyl group appears to play a dual role in the initiator identity of N-formylmethionyl-tRNA by promoting its recognition by IF2 and preventing the misappropriation of this tRNA by the elongation apparatus. The polypeptide is Methionyl-tRNA formyltransferase (Limosilactobacillus fermentum (strain NBRC 3956 / LMG 18251) (Lactobacillus fermentum)).